Consider the following 237-residue polypeptide: Flagellar L-ring protein (237 aa).

The first 24 residues, methionine 1–glycine 24, serve as a signal peptide directing secretion. Residue cysteine 25 is the site of N-palmitoyl cysteine attachment. Residue cysteine 25 is the site of S-diacylglycerol cysteine attachment.

This sequence belongs to the FlgH family. In terms of assembly, the basal body constitutes a major portion of the flagellar organelle and consists of four rings (L,P,S, and M) mounted on a central rod.

The protein resides in the cell outer membrane. It is found in the bacterial flagellum basal body. Its function is as follows. Assembles around the rod to form the L-ring and probably protects the motor/basal body from shearing forces during rotation. This is Flagellar L-ring protein from Pseudomonas syringae pv. tomato (strain ATCC BAA-871 / DC3000).